The sequence spans 454 residues: Exopolyphosphatase PRUNE1 (454 aa).

N-acetylmethionine is present on M1. The Mn(2+) site is built by D28, D30, D106, and D179. Residues 106–108 carry the DHH motif motif; that stretch reads DHH. An essential for homodimerization region spans residues 394–421; that stretch reads SLIAGLSQDDEDPPLPPTPMNSLVDECP. The segment at 398 to 421 is disordered; it reads GLSQDDEDPPLPPTPMNSLVDECP. Residue S400 is modified to Phosphoserine. A Phosphothreonine modification is found at T411. S415 carries the post-translational modification Phosphoserine.

This sequence belongs to the PPase class C family. Prune subfamily. Homooligomer. Able to homodimerize via its C-terminal domain. Interacts with NME1. Interacts with GSK3; at focal adhesion complexes where paxillin and vinculin are colocalized. Interacts with alpha and beta tubulin. It depends on Mn(2+) as a cofactor.

Its subcellular location is the cytoplasm. It is found in the nucleus. The protein resides in the cell junction. The protein localises to the focal adhesion. It catalyses the reaction diphosphate + H2O = 2 phosphate + H(+). With respect to regulation, activated by magnesium ions and inhibited by manganese ions. Inhibited by dipyridamole, moderately sensitive to IBMX and inhibited by vinpocetine. Functionally, phosphodiesterase (PDE) that has higher activity toward cAMP than cGMP, as substrate. Plays a role in cell proliferation, migration and differentiation, and acts as a negative regulator of NME1. Plays a role in the regulation of neurogenesis. Involved in the regulation of microtubule polymerization. The chain is Exopolyphosphatase PRUNE1 (Prune1) from Rattus norvegicus (Rat).